The following is a 296-amino-acid chain: uncharacterized protein (296 aa).

A run of 6 helical transmembrane segments spans residues 10–29, 36–58, 112–131, 188–210, 241–260, and 273–295; these read FSTL…FSLL, YIVL…YYIL, FFAL…MFVT, ILIF…LYLR, MMYG…SAYF, and MYIS…VTYI.

The protein resides in the cell membrane. This is an uncharacterized protein from Clostridium acetobutylicum (strain ATCC 824 / DSM 792 / JCM 1419 / IAM 19013 / LMG 5710 / NBRC 13948 / NRRL B-527 / VKM B-1787 / 2291 / W).